The following is a 172-amino-acid chain: Large ribosomal subunit protein uL10 (172 aa).

It belongs to the universal ribosomal protein uL10 family. Part of the ribosomal stalk of the 50S ribosomal subunit. The N-terminus interacts with L11 and the large rRNA to form the base of the stalk. The C-terminus forms an elongated spine to which L12 dimers bind in a sequential fashion forming a multimeric L10(L12)X complex.

Its function is as follows. Forms part of the ribosomal stalk, playing a central role in the interaction of the ribosome with GTP-bound translation factors. The polypeptide is Large ribosomal subunit protein uL10 (Syntrophotalea carbinolica (strain DSM 2380 / NBRC 103641 / GraBd1) (Pelobacter carbinolicus)).